The sequence spans 309 residues: Glycine-rich RNA-binding protein 3, mitochondrial (309 aa).

A mitochondrion-targeting transit peptide spans M1–M37. An RRM domain is found at S40–D118. The interval F247–A309 is disordered. Positions V258–A273 are enriched in polar residues.

Belongs to the GR-RBP family. In terms of assembly, homodimer. Interacts with ORRM2 and MORF8/RIP1. Interacts with RBG5/ORRM4. Binds to RBG2/ORRM5.

It localises to the mitochondrion. In terms of biological role, possibly has a role in RNA transcription or processing during stress. Involved in C-to-U editing of mitochondrial RNA. Functions as a minor mitochondrial editing factor. Controls 6 percent of the mitochondrial editing sites. This Arabidopsis thaliana (Mouse-ear cress) protein is Glycine-rich RNA-binding protein 3, mitochondrial.